The sequence spans 313 residues: Fe-S cluster assembly protein DRE2 (313 aa).

The interval 1-184 (MTLRILLLLH…KKLLDRSNEV (184 aa)) is N-terminal SAM-like domain. The segment covering 134–144 (NITSNSNNNDS) has biased composition (low complexity). Disordered stretches follow at residues 134-155 (NITS…NNTG), 187-254 (NLAS…QEDN), and 271-313 (NLII…RQSG). The segment at 185–270 (KGNLASGTVK…NDLISELKSD (86 aa)) is linker. A compositionally biased stretch (polar residues) spans 189–207 (ASGTVKSPSPGLTDTSAQN). A compositionally biased stretch (acidic residues) spans 233–254 (SDSDNNEGRDLDDDDDDGQEDN).

It belongs to the anamorsin family. As to quaternary structure, monomer. Interacts with TAH18. Interacts with MIA40.

Its subcellular location is the cytoplasm. The protein resides in the mitochondrion intermembrane space. Its function is as follows. Component of the cytosolic iron-sulfur (Fe-S) protein assembly (CIA) machinery required for the maturation of extramitochondrial Fe-S proteins. Part of an electron transfer chain functioning in an early step of cytosolic Fe-S biogenesis, facilitating the de novo assembly of a [4Fe-4S] cluster on the scaffold complex CFD1-NBP35. Electrons are transferred to DRE2 from NADPH via the FAD- and FMN-containing protein TAH18. TAH18-DRE2 are also required for the assembly of the diferric tyrosyl radical cofactor of ribonucleotide reductase (RNR), probably by providing electrons for reduction during radical cofactor maturation in the catalytic small subunit RNR2. This Lodderomyces elongisporus (strain ATCC 11503 / CBS 2605 / JCM 1781 / NBRC 1676 / NRRL YB-4239) (Yeast) protein is Fe-S cluster assembly protein DRE2 (DRE2).